We begin with the raw amino-acid sequence, 509 residues long: Maturase K (509 aa).

It belongs to the intron maturase 2 family. MatK subfamily.

Its subcellular location is the plastid. Usually encoded in the trnK tRNA gene intron. Probably assists in splicing its own and other chloroplast group II introns. This Castilleja linariifolia (Wyoming Indian paintbrush) protein is Maturase K.